The chain runs to 316 residues: MDSRIFLAFSLCFLFTLPLISSAPNRFLTRSSNTRDGSVIKMKTSASSFGFDPTRVTQLSWTPRVFLYEGFLSDEECDHFIKLAKGKLEKSMVADNDSGESVESEVRTSSGMFLSKRQDDIVSNVEAKLAAWTFLPEENGESMQILHYENGQKYEPHFDYFHDQANLELGGHRIATVLMYLSNVEKGGETVFPMWKGKATQLKDDSWTECAKQGYAVKPRKGDALLFFNLHPNATTDSNSLHGSCPVVEGEKWSATRWIHVKSFERAFNKQSGCMDENVSCEKWAKAGECQKNPTYMVGSDKDHGYCRKSCKACSS.

The Cytoplasmic portion of the chain corresponds to 1 to 4 (MDSR). Residues 5–24 (IFLAFSLCFLFTLPLISSAP) form a helical; Signal-anchor for type II membrane protein membrane-spanning segment. Residues 25-316 (NRFLTRSSNT…CRKSCKACSS (292 aa)) are Lumenal-facing. An N-linked (GlcNAc...) asparagine glycan is attached at asparagine 96. In terms of domain architecture, Fe2OG dioxygenase spans 139–261 (NGESMQILHY…KWSATRWIHV (123 aa)). Fe cation-binding residues include histidine 157 and aspartate 159. Residue asparagine 233 is glycosylated (N-linked (GlcNAc...) asparagine). Residue histidine 242 participates in Fe cation binding. Residue lysine 252 participates in 2-oxoglutarate binding. The region spanning 274–314 (CMDENVSCEKWAKAGECQKNPTYMVGSDKDHGYCRKSCKAC) is the ShKT domain. Cystine bridges form between cysteine 274/cysteine 314, cysteine 281/cysteine 307, and cysteine 290/cysteine 311. Asparagine 278 carries N-linked (GlcNAc...) asparagine glycosylation.

The protein belongs to the P4HA family. The cofactor is Fe(2+). Requires L-ascorbate as cofactor.

It is found in the endoplasmic reticulum membrane. It carries out the reaction L-prolyl-[collagen] + 2-oxoglutarate + O2 = trans-4-hydroxy-L-prolyl-[collagen] + succinate + CO2. Functionally, catalyzes the post-translational formation of 4-hydroxyproline in -Xaa-Pro-Gly- sequences in proline-rich peptide sequences of plant glycoproteins and other proteins. Hydroxyprolines are important constituent of many plant cell wall glycoproteins such as extensins, hydroxyproline-rich glycoproteins, lectins and arabinogalactan proteins. The polypeptide is Probable prolyl 4-hydroxylase 7 (Arabidopsis thaliana (Mouse-ear cress)).